Reading from the N-terminus, the 64-residue chain is Large ribosomal subunit protein bL35 (64 aa).

The protein belongs to the bacterial ribosomal protein bL35 family.

In Amoebophilus asiaticus (strain 5a2), this protein is Large ribosomal subunit protein bL35.